A 534-amino-acid chain; its full sequence is Lysophosphatidylcholine acyltransferase 1 (534 aa).

Residues 1–22 (MRLRGCGPRAAPASSAGASDAR) are disordered. Residues 1–57 (MRLRGCGPRAAPASSAGASDARLLAPPGRNPFVHELRLSALQKAQVALMTLTLFPVR) lie on the Cytoplasmic side of the membrane. Residues 7 to 22 (GPRAAPASSAGASDAR) are compositionally biased toward low complexity. The chain crosses the membrane as a helical; Signal-anchor for type II membrane protein span at residues 58-78 (LLVAAAMMLLAWPLALVASLG). Over 79-534 (SAEKEPEQPP…GRKPVRKKLD (456 aa)) the chain is Lumenal. The HXXXXD motif signature appears at 135–140 (HSSYFD). EF-hand domains lie at 379 to 414 (PVSDLLEDMFSLFDESGSGEVDLRECVVALSVVCRP) and 451 to 486 (VAELTVTDLFRAIDQEEKGKITFADFHRFAEMYPAF). The Ca(2+) site is built by aspartate 392, serine 394, serine 396, glutamate 398, and glutamate 403. Residues 512–534 (GFCADFSPENSDAGRKPVRKKLD) are disordered. A compositionally biased stretch (basic and acidic residues) spans 523–534 (DAGRKPVRKKLD). Positions 531-534 (KKLD) match the Di-lysine motif motif.

This sequence belongs to the 1-acyl-sn-glycerol-3-phosphate acyltransferase family. Erythrocytes.

The protein resides in the endoplasmic reticulum membrane. It localises to the golgi apparatus membrane. It is found in the cell membrane. The protein localises to the lipid droplet. The catalysed reaction is a 1-acyl-sn-glycero-3-phosphocholine + an acyl-CoA = a 1,2-diacyl-sn-glycero-3-phosphocholine + CoA. It catalyses the reaction a 1-acyl-sn-glycero-3-phosphate + an acyl-CoA = a 1,2-diacyl-sn-glycero-3-phosphate + CoA. The enzyme catalyses a 1-O-alkyl-sn-glycero-3-phosphocholine + acetyl-CoA = a 1-O-alkyl-2-acetyl-sn-glycero-3-phosphocholine + CoA. It carries out the reaction a 1-O-(1Z-alkenyl)-sn-glycero-3-phosphocholine + an acyl-CoA = a 1-O-(1Z-alkenyl)-2-acyl-sn-glycero-3-phosphocholine + CoA. The catalysed reaction is 1-acyl-sn-glycero-3-phospho-(1'-sn-glycerol) + an acyl-CoA = a 1,2-diacyl-sn-glycero-3-phospho-(1'-sn-glycerol) + CoA. It catalyses the reaction 1-hexadecanoyl-sn-glycero-3-phosphocholine + (9Z)-octadecenoyl-CoA = 1-hexadecanoyl-2-(9Z-octadecenoyl)-sn-glycero-3-phosphocholine + CoA. The enzyme catalyses 1-hexadecanoyl-sn-glycero-3-phosphocholine + hexadecanoyl-CoA = 1,2-dihexadecanoyl-sn-glycero-3-phosphocholine + CoA. It carries out the reaction 1-O-hexadecyl-sn-glycero-3-phosphocholine + hexadecanoyl-CoA = 1-O-hexadecyl-2-hexadecanoyl-sn-glycero-3-phosphocholine + CoA. The catalysed reaction is a 1-O-(1Z-alkenyl)-sn-glycero-3-phosphocholine + hexadecanoyl-CoA = 1-O-(1Z)-alkenyl-2-hexadecanoyl-sn-glycero-3-phosphocholine + CoA. It catalyses the reaction 1-hexadecanoyl-sn-glycero-3-phospho-(1'-sn-glycerol) + hexadecanoyl-CoA = 1,2-dihexadecanoyl-sn-glycero-3-phospho-(1'-sn-glycerol) + CoA. The enzyme catalyses 1-dodecanoyl-sn-glycero-3-phosphocholine + hexadecanoyl-CoA = 1-dodecanoyl-2-hexadecanoyl-sn-glycero-3-phosphocholine + CoA. It carries out the reaction 1-tetradecanoyl-sn-glycero-3-phosphocholine + hexadecanoyl-CoA = 1-tetradecanoyl-2-hexadecanoyl-sn-glycero-3-phosphocholine + CoA. The catalysed reaction is 1-O-octadecyl-sn-glycero-3-phosphocholine + hexadecanoyl-CoA = 1-O-octadecyl-2-hexadecanoyl-sn-glycero-3-phosphocholine + CoA. It catalyses the reaction 1-octadecanoyl-sn-glycero-3-phosphocholine + hexadecanoyl-CoA = 1-octadecanoyl-2-hexadecanoyl-sn-glycero-3-phosphocholine + CoA. The enzyme catalyses 1-(9Z-octadecenoyl)-sn-glycero-3-phosphocholine + hexadecanoyl-CoA = 1-(9Z-octadecenoyl)-2-hexadecanoyl-sn-glycero-3-phosphocholine + CoA. It carries out the reaction 1-eicosanoyl-sn-glycero-3-phosphocholine + hexadecanoyl-CoA = 1-eicosanoyl-2-hexadecanoyl-sn-glycero-3-phosphocholine + CoA. The catalysed reaction is hexanoyl-CoA + 1-hexadecanoyl-sn-glycero-3-phosphocholine = 1-hexadecanoyl-2-hexanoyl-sn-glycero-3-phosphocholine + CoA. It catalyses the reaction octanoyl-CoA + 1-hexadecanoyl-sn-glycero-3-phosphocholine = 1-hexadecanoyl-2-octanoyl-sn-glycero-3-phosphocholine + CoA. The enzyme catalyses decanoyl-CoA + 1-hexadecanoyl-sn-glycero-3-phosphocholine = 1-hexadecanoyl-2-decanoyl-sn-glycero-3-phosphocholine + CoA. It carries out the reaction dodecanoyl-CoA + 1-hexadecanoyl-sn-glycero-3-phosphocholine = 1-hexadecanoyl-2-dodecanoyl-sn-glycero-3-phosphocholine + CoA. The catalysed reaction is tetradecanoyl-CoA + 1-hexadecanoyl-sn-glycero-3-phosphocholine = 1-hexadecanoyl-2-tetradecanoyl-sn-glycero-3-phosphocholine + CoA. It catalyses the reaction (9Z,12Z)-octadecadienoyl-CoA + 1-hexadecanoyl-sn-glycero-3-phosphocholine = 1-hexadecanoyl-2-(9Z,12Z-octadecadienoyl)-sn-glycero-3-phosphocholine + CoA. The enzyme catalyses (4Z,7Z,10Z,13Z,16Z,19Z)-docosahexaenoyl-CoA + 1-hexadecanoyl-sn-glycero-3-phosphocholine = 1-hexadecanoyl-2-(4Z,7Z,10Z,13Z,16Z,19Z-docosahexaenoyl)-sn-glycero-3-phosphocholine + CoA. It carries out the reaction 1-hexadecanoyl-sn-glycero-3-phosphocholine + acetyl-CoA = 1-hexadecanoyl-2-acetyl-sn-glycero-3-phosphocholine + CoA. The catalysed reaction is eicosanoyl-CoA + 1-hexadecanoyl-sn-glycero-3-phosphocholine = 1-hexadecanoyl-2-eicosanoyl-sn-glycero-3-phosphocholine + CoA. It catalyses the reaction 1-O-hexadecyl-sn-glycero-3-phosphocholine + acetyl-CoA = 1-O-hexadecyl-2-acetyl-sn-glycero-3-phosphocholine + CoA. The enzyme catalyses a 1-acyl-sn-glycero-3-phosphocholine + hexadecanoyl-CoA = 1-acyl-2-hexadecanoyl-sn-glycero-3-phosphocholine + CoA. It carries out the reaction a 1-acyl-sn-glycero-3-phosphate + hexadecanoyl-CoA = 1-acyl-2-hexadecanoyl-sn-glycero-3-phosphate + CoA. The catalysed reaction is 1-acyl-sn-glycero-3-phospho-(1'-sn-glycerol) + hexadecanoyl-CoA = 1-acyl-2-hexadecanoyl-sn-glycero-3-phospho-(1'-sn-glycerol) + CoA. The protein operates within lipid metabolism; phospholipid metabolism. Exhibits acyltransferase activity. Exhibits acetyltransferase activity. Activity is calcium-independent. Catalyzes the conversion of lysophosphatidylcholine (1-acyl-sn-glycero-3-phosphocholine or LPC) into phosphatidylcholine (1,2-diacyl-sn-glycero-3-phosphocholine or PC). Catalyzes the conversion 1-acyl-sn-glycerol-3-phosphate (lysophosphatidic acid or LPA) into 1,2-diacyl-sn-glycerol-3-phosphate (phosphatidic acid or PA) by incorporating an acyl moiety at the sn-2 position of the glycerol backbone. Displays a clear preference for saturated fatty acyl-CoAs, and 1-myristoyl or 1-palmitoyl LPC as acyl donors and acceptors, respectively. Involved in platelet-activating factor (PAF) biosynthesis by catalyzing the conversion of the PAF precursor, 1-O-alkyl-sn-glycero-3-phosphocholine (lyso-PAF) into 1-O-alkyl-2-acetyl-sn-glycero-3-phosphocholine (PAF). May synthesize phosphatidylcholine in pulmonary surfactant, thereby playing a pivotal role in respiratory physiology. Involved in the regulation of lipid droplet number and size. The polypeptide is Lysophosphatidylcholine acyltransferase 1 (LPCAT1) (Homo sapiens (Human)).